The primary structure comprises 135 residues: DNA-binding protein H-NS homolog (135 aa).

Residues 112-117 (QGRTPS) mediate DNA binding.

It belongs to the histone-like protein H-NS family. Homodimer that oligomerizes on DNA into higher-order complexes that form bridges between disparate regions of DNA compacting it.

Its subcellular location is the cytoplasm. It localises to the nucleoid. Functionally, a DNA-binding protein implicated in transcriptional repression and chromosome organization and compaction. Binds nucleation sites in AT-rich DNA and bridges them, forming higher-order nucleoprotein complexes and condensing the chromosome. A subset of genes are repressed by H-NS in association with other proteins. In Buchnera aphidicola subsp. Acyrthosiphon pisum (strain APS) (Acyrthosiphon pisum symbiotic bacterium), this protein is DNA-binding protein H-NS homolog (hns).